The chain runs to 400 residues: Elongation factor Tu (400 aa).

A tr-type G domain is found at 10–208 (KPHVNVGTIG…AMDNYIPDPQ (199 aa)). The segment at 19–26 (GHIDHGKS) is G1. 19-26 (GHIDHGKS) provides a ligand contact to GTP. Serine 26 contributes to the Mg(2+) binding site. A G2 region spans residues 60–64 (GITIN). Residues 81–84 (DCPG) are G3. Residues 81-85 (DCPGH) and 136-139 (NKTD) contribute to the GTP site. The tract at residues 136-139 (NKTD) is G4. Residues 174–176 (SAL) are G5.

This sequence belongs to the TRAFAC class translation factor GTPase superfamily. Classic translation factor GTPase family. EF-Tu/EF-1A subfamily. As to quaternary structure, monomer.

The protein resides in the cytoplasm. The enzyme catalyses GTP + H2O = GDP + phosphate + H(+). Its function is as follows. GTP hydrolase that promotes the GTP-dependent binding of aminoacyl-tRNA to the A-site of ribosomes during protein biosynthesis. In Thermotoga neapolitana (strain ATCC 49049 / DSM 4359 / NBRC 107923 / NS-E), this protein is Elongation factor Tu.